Reading from the N-terminus, the 555-residue chain is Membrane protein insertase YidC (555 aa).

Transmembrane regions (helical) follow at residues 7 to 24 (VLWVIFFMSAVMLYDNWQ), 367 to 387 (WGWSIVLLTLLIKAVFFPLSA), 437 to 457 (LPVVIQIPVFISLYWVLLASV), 476 to 496 (PFFILPVLMAVSMYVQTSLNP), and 511 to 531 (PIAFSVMFFFFPAGLVLYYVV).

The protein belongs to the OXA1/ALB3/YidC family. Type 1 subfamily. As to quaternary structure, interacts with the Sec translocase complex via SecD. Specifically interacts with transmembrane segments of nascent integral membrane proteins during membrane integration.

Its subcellular location is the cell inner membrane. Functionally, required for the insertion and/or proper folding and/or complex formation of integral membrane proteins into the membrane. Involved in integration of membrane proteins that insert both dependently and independently of the Sec translocase complex, as well as at least some lipoproteins. Aids folding of multispanning membrane proteins. This Burkholderia lata (strain ATCC 17760 / DSM 23089 / LMG 22485 / NCIMB 9086 / R18194 / 383) protein is Membrane protein insertase YidC.